We begin with the raw amino-acid sequence, 380 residues long: Endonuclease III homolog 2 (380 aa).

The Nuclear localization signal signature appears at 8 to 12; that stretch reads RKRKH. The interaction with MLH1 stretch occupies residues 15-40; it reads VDIEEVEVRSKYFKKNERTVELVKEN. Lys194 participates in a covalent cross-link: Glycyl lysine isopeptide (Lys-Gly) (interchain with G-Cter in SUMO). The 25-residue stretch at 228–252 folds into the HhH domain; it reads FDSDIPYDIEGILSLPGVGPKMGYL. The active-site Nucleophile; for N-glycosylase activity is Lys248. 4 residues coordinate [4Fe-4S] cluster: Cys319, Cys326, Cys329, and Cys335. A Nuclear localization signal motif is present at residues 376 to 380; sequence RHKKK.

Belongs to the Nth/MutY family. Interacts with MLH1. [4Fe-4S] cluster is required as a cofactor. In terms of processing, monosumoylated.

Its subcellular location is the nucleus. It carries out the reaction 2'-deoxyribonucleotide-(2'-deoxyribose 5'-phosphate)-2'-deoxyribonucleotide-DNA = a 3'-end 2'-deoxyribonucleotide-(2,3-dehydro-2,3-deoxyribose 5'-phosphate)-DNA + a 5'-end 5'-phospho-2'-deoxyribonucleoside-DNA + H(+). In terms of biological role, bifunctional DNA N-glycosylase with associated apurinic/apyrimidinic (AP) lyase function that catalyzes the first step in base excision repair (BER), the primary repair pathway for the repair of oxidative DNA damage. The DNA N-glycosylase activity releases the damaged DNA base from DNA by cleaving the N-glycosidic bond, leaving an AP site. The AP-lyase activity cleaves the phosphodiester bond 3' to the AP site by a beta-elimination. Primarily recognizes and repairs oxidative base damage of pyrimidines, but also purine-derived lesions, alkylation damage as well as abasic sites. Can also repair the oxidation products of 8-oxoguanine. This is Endonuclease III homolog 2 (NTG2) from Saccharomyces cerevisiae (strain ATCC 204508 / S288c) (Baker's yeast).